The sequence spans 309 residues: Integral membrane protein sed5 (309 aa).

At 1-288 the chain is on the cytoplasmic side; sequence MSFQDRTAEF…KFYERMSSNR (288 aa). A coiled-coil region spans residues 37 to 66; the sequence is KHQKSEFTRIAQKIANQINQTGEKLQKLSQ. Residues 218–280 enclose the t-SNARE coiled-coil homology domain; sequence DTYSQQRMSS…GSAQREIVKF (63 aa). A helical; Anchor for type IV membrane protein membrane pass occupies residues 289–308; sequence ALLFKIFGIVIIFFLLWVLV. Position 309 (Thr-309) is a topological domain, vesicular.

This sequence belongs to the syntaxin family.

The protein localises to the membrane. It localises to the golgi apparatus membrane. Its function is as follows. Required for vesicular transport between the endoplasmic reticulum and the Golgi complex. Acts as a target organelle soluble NSF attachment protein receptor (t-SNARE). This chain is Integral membrane protein sed5 (sed5), found in Schizosaccharomyces pombe (strain 972 / ATCC 24843) (Fission yeast).